The sequence spans 122 residues: Large ribosomal subunit protein uL14 (122 aa).

The protein belongs to the universal ribosomal protein uL14 family. As to quaternary structure, part of the 50S ribosomal subunit. Forms a cluster with proteins L3 and L19. In the 70S ribosome, L14 and L19 interact and together make contacts with the 16S rRNA in bridges B5 and B8.

In terms of biological role, binds to 23S rRNA. Forms part of two intersubunit bridges in the 70S ribosome. This chain is Large ribosomal subunit protein uL14, found in Bartonella quintana (strain Toulouse) (Rochalimaea quintana).